The sequence spans 920 residues: 2-oxoglutarate dehydrogenase E1 component (920 aa).

The protein belongs to the alpha-ketoglutarate dehydrogenase family. In terms of assembly, homodimer. Part of the 2-oxoglutarate dehydrogenase (OGDH) complex composed of E1 (2-oxoglutarate dehydrogenase), E2 (dihydrolipoamide succinyltransferase) and E3 (dihydrolipoamide dehydrogenase); the complex contains multiple copies of the three enzymatic components (E1, E2 and E3). Thiamine diphosphate is required as a cofactor.

The catalysed reaction is N(6)-[(R)-lipoyl]-L-lysyl-[protein] + 2-oxoglutarate + H(+) = N(6)-[(R)-S(8)-succinyldihydrolipoyl]-L-lysyl-[protein] + CO2. E1 component of the 2-oxoglutarate dehydrogenase (OGDH) complex which catalyzes the decarboxylation of 2-oxoglutarate, the first step in the conversion of 2-oxoglutarate to succinyl-CoA and CO(2). This chain is 2-oxoglutarate dehydrogenase E1 component, found in Leptospira interrogans serogroup Icterohaemorrhagiae serovar copenhageni (strain Fiocruz L1-130).